Reading from the N-terminus, the 119-residue chain is Large ribosomal subunit protein bL20 (119 aa).

This sequence belongs to the bacterial ribosomal protein bL20 family.

Binds directly to 23S ribosomal RNA and is necessary for the in vitro assembly process of the 50S ribosomal subunit. It is not involved in the protein synthesizing functions of that subunit. In Nitrobacter hamburgensis (strain DSM 10229 / NCIMB 13809 / X14), this protein is Large ribosomal subunit protein bL20.